The following is a 218-amino-acid chain: MTQDELKRKVAEAALDYVKDVTILGVGTGSTVNHFIDLLADLKGGIEGAVSSSQASSERLKKIGIPVLDLNAAGTLDVYVDGADEVNAAKQMIKGGGAALTREKIVAEASRKFVCIVDETKCVDVLGKFPLPVEVIPMARSLVARRLVELGGTPVWRENCITDNGNVILDVHNLTITDPVELERRINDIPGVVCNGVFALRPADVVLIGSPSGVRTLP.

Residues 28–31 (TGST), 81–84 (DGAD), and 94–97 (KGGG) each bind substrate. The Proton acceptor role is filled by glutamate 103. Lysine 121 lines the substrate pocket.

The protein belongs to the ribose 5-phosphate isomerase family. As to quaternary structure, homodimer.

It catalyses the reaction aldehydo-D-ribose 5-phosphate = D-ribulose 5-phosphate. The protein operates within carbohydrate degradation; pentose phosphate pathway; D-ribose 5-phosphate from D-ribulose 5-phosphate (non-oxidative stage): step 1/1. In terms of biological role, catalyzes the reversible conversion of ribose-5-phosphate to ribulose 5-phosphate. The protein is Ribose-5-phosphate isomerase A of Methylococcus capsulatus (strain ATCC 33009 / NCIMB 11132 / Bath).